We begin with the raw amino-acid sequence, 184 residues long: Ferredoxin-thioredoxin reductase subunit A2, chloroplastic (184 aa).

A chloroplast-targeting transit peptide spans 1–71; it reads MTNSYALSPA…SRKNPKSTIR (71 aa).

This sequence belongs to the ferredoxin thioredoxin reductase alpha subunit family. In terms of assembly, heterodimer of subunit A (variable subunit) and subunit B (catalytic subunit). Heterodimeric FTR forms a complex with ferredoxin and thioredoxin.

It localises to the plastid. Its subcellular location is the chloroplast. In terms of biological role, variable subunit of the ferredoxin-thioredoxin reductase (FTR), which catalyzes the two-electron reduction of thioredoxins by the electrons provided by reduced ferredoxin. This is Ferredoxin-thioredoxin reductase subunit A2, chloroplastic from Arabidopsis thaliana (Mouse-ear cress).